A 393-amino-acid polypeptide reads, in one-letter code: Rubredoxin-NAD(+) reductase (393 aa).

Residues 9–12 (SGMA), 33–34 (CA), Lys-42, Val-80, Glu-162, Asp-282, Val-294, and Lys-325 each bind FAD.

It belongs to the FAD-dependent oxidoreductase family. As to quaternary structure, homodimer. Requires FAD as cofactor.

The protein resides in the cytoplasm. It catalyses the reaction 2 reduced [rubredoxin] + NAD(+) + H(+) = 2 oxidized [rubredoxin] + NADH. Its pathway is hydrocarbon metabolism; alkane degradation. In terms of biological role, involved in the hydrocarbon hydroxylating system, which transfers electrons from NADH to rubredoxin reductase and then through rubredoxin to alkane 1 monooxygenase. The protein is Rubredoxin-NAD(+) reductase (rubB) of Acinetobacter baylyi (strain ATCC 33305 / BD413 / ADP1).